A 471-amino-acid polypeptide reads, in one-letter code: Argininosuccinate lyase (471 aa).

This sequence belongs to the lyase 1 family. Argininosuccinate lyase subfamily.

Its subcellular location is the cytoplasm. The enzyme catalyses 2-(N(omega)-L-arginino)succinate = fumarate + L-arginine. It participates in amino-acid biosynthesis; L-arginine biosynthesis; L-arginine from L-ornithine and carbamoyl phosphate: step 3/3. The protein is Argininosuccinate lyase of Deinococcus radiodurans (strain ATCC 13939 / DSM 20539 / JCM 16871 / CCUG 27074 / LMG 4051 / NBRC 15346 / NCIMB 9279 / VKM B-1422 / R1).